The primary structure comprises 274 residues: uncharacterized protein (274 aa).

The next 5 membrane-spanning stretches (helical) occupy residues 9 to 29, 64 to 84, 135 to 155, 165 to 185, and 219 to 239; these read SLLLTEVAAYFTSTTLFVSIL, WFWHFYAFISLLNPLFTFFIL, LAGHYLLGYLFYTHTFLALLL, MSSMQFVGLGIYAIGSIWQNA, and IIVYTGIALIAQHWLIWLVLG.

Belongs to the steroid 5-alpha reductase family.

The protein resides in the endoplasmic reticulum membrane. This is an uncharacterized protein from Schizosaccharomyces pombe (strain 972 / ATCC 24843) (Fission yeast).